A 512-amino-acid polypeptide reads, in one-letter code: FAD-linked oxidoreductase iacH (512 aa).

The signal sequence occupies residues 1–22 (MVSLKACVVAYGFTLLPALVSG). N-linked (GlcNAc...) asparagine glycosylation is found at N39, N55, N69, N210, N217, N278, N295, and N367. An FAD-binding PCMH-type domain is found at 77-248 (LDTPDVQLVV…TSLEKKIYPG (172 aa)).

It belongs to the oxygen-dependent FAD-linked oxidoreductase family. FAD serves as cofactor.

It functions in the pathway secondary metabolite biosynthesis. Its function is as follows. FAD-linked oxidoreductase; part of the gene cluster that mediates the biosynthesis of iso-A82775C, a enylepoxycyclohexane and biosynthetic precursor of the chloropestolide anticancer natural products. Within the cluster, the prenyltransferase iacE prenylates siccayne to generate pestalodiol E, using dimethylallyl diphosphate (DMAPP) as cosubstrate. The probable oxidoreductase iacF is then involved in the epoxidation of pestalodiol F to pestalodiol F, which is further converted to pestalofone A by the short-chain dehydrogenase/reductase iacG. Iso-A82775C is subsequently generated from pestalofone A by the short-chain dehydrogenase/reductase iacC. Iso-A82775C is further condensed with maldoxin via a Diels-Alder reaction to produce the anticancer natural products chloropestolides A to E. The polypeptide is FAD-linked oxidoreductase iacH (Pestalotiopsis fici (strain W106-1 / CGMCC3.15140)).